The sequence spans 310 residues: Tagatose-6-phosphate kinase (310 aa).

The protein belongs to the carbohydrate kinase PfkB family. LacC subfamily.

The catalysed reaction is D-tagatofuranose 6-phosphate + ATP = D-tagatofuranose 1,6-bisphosphate + ADP + H(+). It functions in the pathway carbohydrate metabolism; D-tagatose 6-phosphate degradation; D-glyceraldehyde 3-phosphate and glycerone phosphate from D-tagatose 6-phosphate: step 1/2. This chain is Tagatose-6-phosphate kinase, found in Staphylococcus aureus (strain USA300 / TCH1516).